The chain runs to 643 residues: Transcription elongation factor B polypeptide 3 (643 aa).

Positions Asp9–Glu82 constitute a TFIIS N-terminal domain. 2 disordered regions span residues Ile86 to Asn289 and Ser302 to Pro351. Over residues His94–Asp106 the composition is skewed to basic and acidic residues. The segment covering Lys114–Leu124 has biased composition (polar residues). Ser120 is modified (phosphoserine). Basic residues predominate over residues Ser127–Ser136. Composition is skewed to basic and acidic residues over residues His164–Ser198 and Ser207–Lys237. Over residues Ser238 to Pro255 the composition is skewed to basic residues. Positions Ser302 to Ser336 are enriched in low complexity. Residues Ala413–Glu571 are activation domain. Residues Ser439 to Leu448 form an interacting with Elongin BC complex region.

It localises to the nucleus. Functionally, SIII, also known as elongin, is a general transcription elongation factor that increases the RNA polymerase II transcription elongation past template-encoded arresting sites. Subunit A is transcriptionally active and its transcription activity is strongly enhanced by binding to the dimeric complex of the SIII regulatory subunits B and C (elongin BC complex). May play an important role in metamorphosis. The polypeptide is Transcription elongation factor B polypeptide 3 (EloA) (Drosophila melanogaster (Fruit fly)).